The following is a 292-amino-acid chain: (S)-phenoxypropionate/alpha-ketoglutarate-dioxygenase (292 aa).

The Fe cation site is built by histidine 108 and aspartate 110. 2-oxoglutarate-binding residues include threonine 135 and tryptophan 247. Histidine 262 lines the Fe cation pocket. Arginine 273 contributes to the 2-oxoglutarate binding site.

The protein belongs to the TfdA dioxygenase family. In terms of assembly, monomer. It depends on Fe cation as a cofactor. Requires L-ascorbate as cofactor.

It carries out the reaction (S)-2-(4-chloro-2-methylphenoxy)propanoate + 2-oxoglutarate + O2 = 2-methyl-4-chlorophenol + pyruvate + succinate + CO2. The enzyme catalyses (S)-(2,4-dichlorophenoxy)propanoate + 2-oxoglutarate + O2 = 2,4-dichlorophenol + pyruvate + succinate + CO2. It functions in the pathway xenobiotic degradation; 2-(2,4-dichlorophenoxy)propanoate degradation. Inhibited by divalent cations, most significantly by copper and nickel, and by diethylpyrocarbonate (DEPC). Functionally, involved in the degradation of the phenoxypropionate herbicides. Catalyzes the enantiospecific cleavage of the ether bond in the herbicid S-dichlorprop ((S)-2-(2,4-dichlorophenoxy)propionate)(S-2,4-DP) and S-mecoprop ((S)-2-(4-chloro-2-methylphenoxy)propionate)(S-2,4-MCPP). It can also accept (RS)-2-(4-chlorophenoxy)propionate, (RS)-2-(m-chlorophenoxy)propionate and phenoxyacetate derivatives such as 2,4-dichlorophenoxyacetate (2,4-D), however it can only accept 2-oxoglutarate as oxygen acceptor. The protein is (S)-phenoxypropionate/alpha-ketoglutarate-dioxygenase of Delftia acidovorans (Pseudomonas acidovorans).